The chain runs to 369 residues: Epoxyqueuosine reductase (369 aa).

The Proton donor role is filled by D135. The 4Fe-4S ferredoxin-type domain maps to 177-209 (IPLPVDEPSENQCGKCTACITSCPTNAIVAEGV). C189, C192, C195, C199, C215, C242, C245, and C249 together coordinate [4Fe-4S] cluster.

Belongs to the QueG family. In terms of assembly, monomer. The cofactor is cob(II)alamin. Requires [4Fe-4S] cluster as cofactor.

The protein resides in the cytoplasm. The enzyme catalyses epoxyqueuosine(34) in tRNA + AH2 = queuosine(34) in tRNA + A + H2O. It functions in the pathway tRNA modification; tRNA-queuosine biosynthesis. In terms of biological role, catalyzes the conversion of epoxyqueuosine (oQ) to queuosine (Q), which is a hypermodified base found in the wobble positions of tRNA(Asp), tRNA(Asn), tRNA(His) and tRNA(Tyr). This is Epoxyqueuosine reductase from Vibrio cholerae serotype O1 (strain ATCC 39315 / El Tor Inaba N16961).